Here is a 1358-residue protein sequence, read N- to C-terminus: DNA-directed RNA polymerase subunit beta (1358 aa).

It belongs to the RNA polymerase beta chain family. As to quaternary structure, the RNAP catalytic core consists of 2 alpha, 1 beta, 1 beta' and 1 omega subunit. When a sigma factor is associated with the core the holoenzyme is formed, which can initiate transcription.

The catalysed reaction is RNA(n) + a ribonucleoside 5'-triphosphate = RNA(n+1) + diphosphate. Functionally, DNA-dependent RNA polymerase catalyzes the transcription of DNA into RNA using the four ribonucleoside triphosphates as substrates. This Francisella tularensis subsp. tularensis (strain FSC 198) protein is DNA-directed RNA polymerase subunit beta.